A 472-amino-acid polypeptide reads, in one-letter code: Membrane-bound acylglycerophosphatidylinositol O-acyltransferase MBOAT7 (472 aa).

Residues 1 to 5 (MSPEE) are Cytoplasmic-facing. A helical membrane pass occupies residues 6–22 (WTYLVVLLISIPIGFLF). At 23 to 33 (KKAGPGLKRWG) the chain is on the lumenal side. The chain crosses the membrane as a helical span at residues 34-57 (AAAVGLGLTLFTCGPHTLHSLVTI). The Cytoplasmic segment spans residues 58 to 73 (LGTWALIQAQPCSCHA). Residues 74 to 93 (LALAWTFSYLLFFRALSLLG) traverse the membrane as a helical segment. Residues 94-194 (LPTPTPFTNA…VPSLRPLLRR (101 aa)) are Lumenal-facing. A helical transmembrane segment spans residues 195 to 212 (AWPAPLFGLLFLLSSHLF). Over 213-231 (PLEAVREDAFYARPLPARL) the chain is Cytoplasmic. Residues 232–261 (FYMIPVFFAFRMRFYVAWIAAECGCIAAGF) traverse the membrane as a helical segment. Topologically, residues 262-426 (GAYPVAAKAR…LSLRDTLRYW (165 aa)) are lumenal. Residue asparagine 321 is glycosylated (N-linked (GlcNAc...) asparagine). Residues 427 to 447 (ASVYFCVHVLALAALGLGLAL) traverse the membrane as a helical segment. At 448 to 472 (GRGGPGRRKSGAPAPSPASGKLREE) the chain is on the cytoplasmic side. The interval 450–472 (GGPGRRKSGAPAPSPASGKLREE) is disordered.

This sequence belongs to the membrane-bound acyltransferase family. Interacts with SPTSSA; the interaction facilitates MBOAT7 location to mitochondria-associated membranes (MAMs).

The protein resides in the endoplasmic reticulum membrane. It carries out the reaction a 1-acyl-sn-glycero-3-phospho-(1D-myo-inositol) + an acyl-CoA = a 1,2-diacyl-sn-glycero-3-phospho-(1D-myo-inositol) + CoA. It catalyses the reaction a 1-acyl-sn-glycero-3-phospho-(1D-myo-inositol) + (5Z,8Z,11Z,14Z)-eicosatetraenoyl-CoA = a 1-acyl-2-(5Z,8Z,11Z,14Z-eicosatetraenoyl)-sn-glycero-3-phospho-(1D-myo-inositol) + CoA. The catalysed reaction is (5Z,8Z,11Z,14Z)-eicosatetraenoyl-CoA + 1-hexadecanoyl-sn-glycero-3-phosphocholine = 1-hexadecanoyl-2-(5Z,8Z,11Z,14Z-eicosatetraenoyl)-sn-glycero-3-phosphocholine + CoA. The enzyme catalyses 1-octadecanoyl-sn-glycero-3-phospho-(1D-myo-inositol) + (5Z,8Z,11Z,14Z)-eicosatetraenoyl-CoA = 1-octadecanoyl-2-(5Z,8Z,11Z,14Z-eicosatetraenoyl)-sn-glycero-3-phospho-(1D-myo-inositol) + CoA. The protein operates within lipid metabolism; phospholipid metabolism. Acyltransferase which catalyzes the transfer of an acyl group from an acyl-CoA to a lysophosphatidylinositol (1-acylglycerophosphatidylinositol or LPI) leading to the production of a phosphatidylinositol (1,2-diacyl-sn-glycero-3-phosphoinositol or PI) and participates in the reacylation step of the phospholipid remodeling pathway also known as the Lands cycle. Prefers arachidonoyl-CoA as the acyl donor, thus contributing to the regulation of free levels arachidonic acid in cell. In liver, participates in the regulation of triglyceride metabolism through the phosphatidylinositol acyl-chain remodeling regulation. The sequence is that of Membrane-bound acylglycerophosphatidylinositol O-acyltransferase MBOAT7 (MBOAT7) from Bos taurus (Bovine).